The sequence spans 221 residues: MENIYIALKTIKKMAGEKNTVFISSKELANEMNVSQQTASRIIISLDRLGYITRTLENRKQKITINDSGLDVLYREYNEISSILRFSQELKLVGAVQDGLGEGKYYISKKGYKDQFIAKLGIDPYPGTLNIKILNEYENNLRRIKNSDGIYITGFKDQQRTFGGVFCHAARIDGIRCFIIFPERSVYRDTFEVISEKYLRKELNLENGAIIEVLASIDGKL.

Residues 1–89 (MENIYIALKT…ISSILRFSQE (89 aa)) form an H-T-H motif-like region. Positions 90-221 (LKLVGAVQDG…EVLASIDGKL (132 aa)) are riboflavin kinase. 99–104 (GLGEGK) provides a ligand contact to CDP. The Mg(2+) site is built by threonine 128 and asparagine 130. Serine 185 and glutamate 192 together coordinate FMN. 197-200 (KYLR) provides a ligand contact to CDP.

It belongs to the archaeal riboflavin kinase family. Mg(2+) serves as cofactor.

The catalysed reaction is riboflavin + CTP = CDP + FMN + H(+). Its pathway is cofactor biosynthesis; FMN biosynthesis; FMN from riboflavin (CTP route): step 1/1. Catalyzes the CTP-dependent phosphorylation of riboflavin (vitamin B2) to form flavin mononucleotide (FMN). This chain is Riboflavin kinase (ribK), found in Picrophilus torridus (strain ATCC 700027 / DSM 9790 / JCM 10055 / NBRC 100828 / KAW 2/3).